A 197-amino-acid chain; its full sequence is Phosphoheptose isomerase (197 aa).

Residues 36 to 197 (MVNALLNEGK…IDSQLFGSEE (162 aa)) enclose the SIS domain. 51–53 (NGG) contributes to the substrate binding site. Residues His-60 and Glu-64 each coordinate Zn(2+). Substrate-binding positions include Glu-64, 93-94 (ND), 119-121 (STS), Ser-124, and Gln-174. Zn(2+) contacts are provided by Gln-174 and His-182.

This sequence belongs to the SIS family. GmhA subfamily. Homotetramer. Zn(2+) is required as a cofactor.

Its subcellular location is the cytoplasm. The catalysed reaction is 2 D-sedoheptulose 7-phosphate = D-glycero-alpha-D-manno-heptose 7-phosphate + D-glycero-beta-D-manno-heptose 7-phosphate. The protein operates within carbohydrate biosynthesis; D-glycero-D-manno-heptose 7-phosphate biosynthesis; D-glycero-alpha-D-manno-heptose 7-phosphate and D-glycero-beta-D-manno-heptose 7-phosphate from sedoheptulose 7-phosphate: step 1/1. In terms of biological role, catalyzes the isomerization of sedoheptulose 7-phosphate in D-glycero-D-manno-heptose 7-phosphate. This is Phosphoheptose isomerase from Pseudomonas fluorescens (strain SBW25).